The following is a 102-amino-acid chain: ATP-dependent Clp protease adapter protein ClpS (102 aa).

The protein belongs to the ClpS family. As to quaternary structure, binds to the N-terminal domain of the chaperone ClpA.

In terms of biological role, involved in the modulation of the specificity of the ClpAP-mediated ATP-dependent protein degradation. This is ATP-dependent Clp protease adapter protein ClpS from Wolinella succinogenes (strain ATCC 29543 / DSM 1740 / CCUG 13145 / JCM 31913 / LMG 7466 / NCTC 11488 / FDC 602W) (Vibrio succinogenes).